The following is a 246-amino-acid chain: Probable septum site-determining protein MinC (246 aa).

This sequence belongs to the MinC family. Interacts with MinD and FtsZ.

Cell division inhibitor that blocks the formation of polar Z ring septums. Rapidly oscillates between the poles of the cell to destabilize FtsZ filaments that have formed before they mature into polar Z rings. Prevents FtsZ polymerization. The sequence is that of Probable septum site-determining protein MinC from Lachnospira eligens (strain ATCC 27750 / DSM 3376 / VPI C15-48 / C15-B4) (Eubacterium eligens).